Consider the following 249-residue polypeptide: MNKKKLKAHFFVLYIICSCFILILSIKHDKYNNESKKKKKFFKIRTKIIFYKLKKVNQIKNAPQLYIQFYKPKCHKTTQSLKDIFNELSGNKNPENPKNIDEYNLTPKLKKTVELFQSMPNSPYYKSQQVILMGKKISSMPDKHKIRQNQVLGCQSVVYIYPKVEENEDKKKVIVWLGHSDGLLTKGIVYILTDGLSGYMPEDILKVNPNFITLTGISEFLTMSRINGYLNIMNKIKIFCTNILKNMDN.

C154 functions as the Cysteine persulfide intermediate in the catalytic mechanism.

This sequence belongs to the SufE family. Monomer. Interacts with SufS; interaction enhances cysteine desulfurase activity of SufS. In terms of processing, proteolytically cleaved.

The protein resides in the plastid. The protein localises to the apicoplast. It functions in the pathway cofactor biosynthesis; iron-sulfur cluster biosynthesis. Its function is as follows. Participates in sulfur mobilization (SUF) pathway for iron-sulfur (Fe-S) cluster biogenesis. Enhances cysteine desulfurase activity of SufS. Probably functions as a sulfur acceptor for SufS. This is Cysteine desulfuration protein SufE from Plasmodium falciparum (isolate 3D7).